A 131-amino-acid polypeptide reads, in one-letter code: uncharacterized protein (131 aa).

The tract at residues 1 to 67 (MCSARKLLRG…HSGEPIGDDY (67 aa)) is disordered. The residue at position 14 (Ser-14) is a Phosphoserine. Residues 99-119 (VVVLFFWLMLWFLGLQALGLV) traverse the membrane as a helical segment.

Belongs to the FAM241 family.

The protein localises to the membrane. This is an uncharacterized protein from Mus musculus (Mouse).